The primary structure comprises 374 residues: MSKGIVLLAAGGTGGHVFPAEALAFKLKERGYSVHLVTDSRAERYAGKFPAEEIHVVPSATIGSKNPVAVARSLWTLWSGMRAAKRLIQRLKPVIVVGFGGYPTVPPLLAATRLGVASMLHEQNAVMGRANKALAPRVKAIAGGFLPESGDVFSDKTVATGNPVRPAILAAAEQPYLPSHPGEPFNLVVFGGSQGAQYFSKAMPTAISLLDDGLRARLRVTQQVRPEDMEMVSGCVAKLEMGADIAPFFNDMAERLAQAHLVICRSGASTVSEISVIGRPAILVPYPHALDHDQAANAAALAATGGAKVIPQSELSPERIASILSHVMNDPDKLSHMAAAAKLAGKPDAANLLADMVEAIAAGKTVSEFKRTRA.

UDP-N-acetyl-alpha-D-glucosamine-binding positions include 13 to 15 (TGG), asparagine 124, arginine 165, serine 193, and glutamine 294.

Belongs to the glycosyltransferase 28 family. MurG subfamily.

It localises to the cell inner membrane. The enzyme catalyses di-trans,octa-cis-undecaprenyl diphospho-N-acetyl-alpha-D-muramoyl-L-alanyl-D-glutamyl-meso-2,6-diaminopimeloyl-D-alanyl-D-alanine + UDP-N-acetyl-alpha-D-glucosamine = di-trans,octa-cis-undecaprenyl diphospho-[N-acetyl-alpha-D-glucosaminyl-(1-&gt;4)]-N-acetyl-alpha-D-muramoyl-L-alanyl-D-glutamyl-meso-2,6-diaminopimeloyl-D-alanyl-D-alanine + UDP + H(+). The protein operates within cell wall biogenesis; peptidoglycan biosynthesis. Cell wall formation. Catalyzes the transfer of a GlcNAc subunit on undecaprenyl-pyrophosphoryl-MurNAc-pentapeptide (lipid intermediate I) to form undecaprenyl-pyrophosphoryl-MurNAc-(pentapeptide)GlcNAc (lipid intermediate II). The chain is UDP-N-acetylglucosamine--N-acetylmuramyl-(pentapeptide) pyrophosphoryl-undecaprenol N-acetylglucosamine transferase from Rhizobium etli (strain ATCC 51251 / DSM 11541 / JCM 21823 / NBRC 15573 / CFN 42).